Here is an 802-residue protein sequence, read N- to C-terminus: Receptor-type tyrosine-protein phosphatase alpha (802 aa).

The N-terminal stretch at 1–19 (MDSWFILVLLGSGLICVSA) is a signal peptide. Topologically, residues 20-151 (NNATTVAPSV…DSKDRRDETP (132 aa)) are extracellular. N-linked (GlcNAc...) asparagine glycosylation is found at N21 and N36. The interval 39 to 59 (TAEPVKEEAKTSNPTSSLTSL) is disordered. Residues N68, N80, N86, N104, and N124 are each glycosylated (N-linked (GlcNAc...) asparagine). Polar residues-rich tracts occupy residues 79 to 115 (VNSS…QFTD) and 123 to 141 (GNSS…SGNS). The disordered stretch occupies residues 79–146 (VNSSDSDNGT…PSGNSDSKDR (68 aa)). Residues 152–174 (IIAVMVALSSLLVIVFIIIVLYM) form a helical membrane-spanning segment. At 175-802 (LRFKKYKQAG…DAFSDYANFK (628 aa)) the chain is on the cytoplasmic side. Phosphoserine is present on residues S211 and S213. 2 Tyrosine-protein phosphatase domains span residues 241 to 501 (FREE…LLEH) and 533 to 791 (LEEE…VQEY). Substrate contacts are provided by residues D410, 442-448 (CSAGVGR), and Q486. The Phosphocysteine intermediate role is filled by C442. C732 functions as the Phosphocysteine intermediate in the catalytic mechanism. Y798 is subject to Phosphotyrosine.

It belongs to the protein-tyrosine phosphatase family. Receptor class 4 subfamily. Part of a complex comprised of PTPRA, BCAR1, BCAR3 (via SH2 domain), and SRC. Within the complex, interacts (when phosphorylated on Tyr-798) with BCAR3 (via SH2 domain). Interacts with GRB2. Integrin binding to extracellular matrix induces phosphorylation at Tyr-798 which induces PTPRA localization and recruitment of BCAR3, BCAR1 and CRK to focal adhesions.

It localises to the cell membrane. The protein resides in the cell junction. The protein localises to the focal adhesion. It catalyses the reaction O-phospho-L-tyrosyl-[protein] + H2O = L-tyrosyl-[protein] + phosphate. In terms of biological role, tyrosine protein phosphatase which is involved in integrin-mediated focal adhesion formation. Following integrin engagement, specifically recruits BCAR3, BCAR1 and CRK to focal adhesions thereby promoting SRC-mediated phosphorylation of BRAC1 and the subsequent activation of PAK and small GTPase RAC1 and CDC42. The protein is Receptor-type tyrosine-protein phosphatase alpha (PTPRA) of Homo sapiens (Human).